The sequence spans 158 residues: NAD(P)H-quinone oxidoreductase subunit J, chloroplastic (158 aa).

This sequence belongs to the complex I 30 kDa subunit family. In terms of assembly, NDH is composed of at least 16 different subunits, 5 of which are encoded in the nucleus.

It is found in the plastid. Its subcellular location is the chloroplast thylakoid membrane. It catalyses the reaction a plastoquinone + NADH + (n+1) H(+)(in) = a plastoquinol + NAD(+) + n H(+)(out). The catalysed reaction is a plastoquinone + NADPH + (n+1) H(+)(in) = a plastoquinol + NADP(+) + n H(+)(out). Its function is as follows. NDH shuttles electrons from NAD(P)H:plastoquinone, via FMN and iron-sulfur (Fe-S) centers, to quinones in the photosynthetic chain and possibly in a chloroplast respiratory chain. The immediate electron acceptor for the enzyme in this species is believed to be plastoquinone. Couples the redox reaction to proton translocation, and thus conserves the redox energy in a proton gradient. The protein is NAD(P)H-quinone oxidoreductase subunit J, chloroplastic of Piper cenocladum (Ant piper).